The primary structure comprises 303 residues: Sterol-4-alpha-carboxylate 3-dehydrogenase ERG26, decarboxylating (303 aa).

Residues 8–9 and 30–32 each bind NADP(+); these read SL and TAS. S71 is a substrate binding site. The tract at residues 77 to 96 is disordered; the sequence is PTQEPTSEENAHRYDENNAP. Residues Y102, K106, and 128–131 each bind NADP(+); that span reads IPGI. Residue Y102 coordinates substrate. The active-site Proton donor is the K106.

This sequence belongs to the 3-beta-HSD family. Heterotetramer of ERG25, ERG26, ERG27 and ERG28. ERG28 acts as a scaffold to tether ERG27 and other 4,4-demethylation-related enzymes, forming a demethylation enzyme complex, in the endoplasmic reticulum.

The protein resides in the endoplasmic reticulum membrane. Its pathway is steroid metabolism; ergosterol biosynthesis. In terms of biological role, sterol-4-alpha-carboxylate 3-dehydrogenase; part of the third module of ergosterol biosynthesis pathway that includes the late steps of the pathway. ERG26 is a catalytic component of the C-4 demethylation complex that catalyzes the conversion of 4,4-dimethylfecosterol into fecosterol via 4-methylfecosterol. The third module or late pathway involves the ergosterol synthesis itself through consecutive reactions that mainly occur in the endoplasmic reticulum (ER) membrane. Firstly, the squalene synthase ERG9 catalyzes the condensation of 2 farnesyl pyrophosphate moieties to form squalene, which is the precursor of all steroids. Squalene synthase is crucial for balancing the incorporation of farnesyl diphosphate (FPP) into sterol and nonsterol isoprene synthesis. Secondly, squalene is converted into lanosterol by the consecutive action of the squalene epoxidase ERG1 and the lanosterol synthase ERG7. Then, the delta(24)-sterol C-methyltransferase ERG6 methylates lanosterol at C-24 to produce eburicol. Eburicol is the substrate of the sterol 14-alpha demethylase encoded by CYP51A, CYP51B and CYP51C, to yield 4,4,24-trimethyl ergosta-8,14,24(28)-trienol. CYP51B encodes the enzyme primarily responsible for sterol 14-alpha-demethylation, and plays an essential role in ascospore formation. CYP51A encodes an additional sterol 14-alpha-demethylase, induced on ergosterol depletion and responsible for the intrinsic variation in azole sensitivity. The third CYP51 isoform, CYP51C, does not encode a sterol 14-alpha-demethylase, but is required for full virulence on host wheat ears. The C-14 reductase ERG24 then reduces the C14=C15 double bond which leads to 4,4-dimethylfecosterol. A sequence of further demethylations at C-4, involving the C-4 demethylation complex containing the C-4 methylsterol oxidases ERG25, the sterol-4-alpha-carboxylate 3-dehydrogenase ERG26 and the 3-keto-steroid reductase ERG27, leads to the production of fecosterol via 4-methylfecosterol. ERG28 has a role as a scaffold to help anchor ERG25, ERG26 and ERG27 to the endoplasmic reticulum. The C-8 sterol isomerase ERG2 then catalyzes the reaction which results in unsaturation at C-7 in the B ring of sterols and thus converts fecosterol to episterol. The sterol-C5-desaturases ERG3A and ERG3BB then catalyze the introduction of a C-5 double bond in the B ring to produce 5-dehydroepisterol. The C-22 sterol desaturases ERG5A and ERG5B further convert 5-dehydroepisterol into ergosta-5,7,22,24(28)-tetraen-3beta-ol by forming the C-22(23) double bond in the sterol side chain. Finally, ergosta-5,7,22,24(28)-tetraen-3beta-ol is substrate of the C-24(28) sterol reductase ERG4 to produce ergosterol. The polypeptide is Sterol-4-alpha-carboxylate 3-dehydrogenase ERG26, decarboxylating (Gibberella zeae (strain ATCC MYA-4620 / CBS 123657 / FGSC 9075 / NRRL 31084 / PH-1) (Wheat head blight fungus)).